A 180-amino-acid polypeptide reads, in one-letter code: MASSIVSSAAVATRANGAQASMVGPFTGLKSTASFPVSRKQNLDITSIASNGGRVRCMQVWPPINMKKYETLSYLPDLSDEQLLKEVEYLLKNGWVPCLEFETEHGFVYRENNKSPGYYDGRYWTMWKLPMFGCTDATQVLAEVEEAKKAYPQAWIRIIGFDNVRQVQCISFIAYKPEGY.

The N-terminal 56 residues, 1 to 56, are a transit peptide targeting the chloroplast; that stretch reads MASSIVSSAAVATRANGAQASMVGPFTGLKSTASFPVSRKQNLDITSIASNGGRVR.

Belongs to the RuBisCO small chain family. Heterohexadecamer of 8 large and 8 small subunits.

It localises to the plastid. It is found in the chloroplast. In terms of biological role, ruBisCO catalyzes two reactions: the carboxylation of D-ribulose 1,5-bisphosphate, the primary event in carbon dioxide fixation, as well as the oxidative fragmentation of the pentose substrate. Both reactions occur simultaneously and in competition at the same active site. Although the small subunit is not catalytic it is essential for maximal activity. The chain is Ribulose bisphosphate carboxylase small subunit, chloroplastic 4 from Solanum tuberosum (Potato).